The chain runs to 801 residues: Na(+)/H(+) antiporter subunit A1 (801 aa).

21 helical membrane passes run 4–25 (LHIAVILPLIFALIIPILYRFF), 30–49 (LGWFVLPVPIVIFIYMLTLI), 79–101 (LGLLFSLLISGIGSLVVLYSIGY), 108–127 (LGNFYCYLLLFMGAMLGVVL), 131–153 (VIILYLFWELTSFSSFLLISFWR), 166–188 (LIITVFGGLSLLGGIILLAIPTQ), 208–230 (FIFAMILIMIGAFTKSAQFPFYI), 243–265 (SAYLHSATMVKAGLYLIARMTPI), 270–289 (QGWIWTVTLVGLITLFWASL), 302–324 (AFSTVSQLGMIMAMLGIGAISYH), 339–361 (AAIFHLINHATFKGALFMITGAV), 373–395 (LGGLLTIMPISFTITVITALSMA), 429–451 (YLFPIIGIVGSVFTFVYSIKFIM), 472–494 (ILMLLSPAILATLVIVFGLFPGI), 526–548 (AFLSTLVIYILGILLIVTFSYWV), 589–611 (NNLVIIFGALILLTFVTVFSVPF), 621–641 (IRIFEVCIVILLLSAAFLILF), 646–668 (LFSIIMLSAVGYAVSVLFIFFKA), 672–694 (ALTQFVVESISTALFLLCFYHLP), 707–729 (LTNALIAGGVGLSVIIIGLIAYG), and 767–784 (LFESSVLGIAGLAVYTMI).

Belongs to the CPA3 antiporters (TC 2.A.63) subunit A family. As to quaternary structure, may form a heterooligomeric complex that consists of seven subunits: mnhA1, mnhB1, mnhC1, mnhD1, mnhE1, mnhF1 and mnhG1.

It localises to the cell membrane. With respect to regulation, na(+) extrusion is completely inhibited by the H(+) conductor carbonyl cyanide m-chlorophenylhydrazone (CCCP). Its function is as follows. Mnh complex is a Na(+)/H(+) antiporter involved in Na(+) excretion. In Staphylococcus aureus (strain MRSA252), this protein is Na(+)/H(+) antiporter subunit A1 (mnhA1).